Consider the following 691-residue polypeptide: MSRTLFVTTALPYANGSFHIGHIMEYIQADIWVRSMRMAGHTVHFVGADDAHGAPIMLKAEKEGITPQALVARYAAERPRYLDGFHIRFDHWHSTDSAENVALSHEIYRALKAAGLIETRSIEQFFDPVKGMFLADRYIKGECPRCHAKDQYGDSCEVCGAVYAPTELIQPYSALTGATPVLKRSDHFFFKLSDPRCVEFLQQWTTGSNRNGIKHLQSEVQAKTREWLGGEEGEAKLGDWDISRDAPYFGIEIPDAPGKYFYVWLDAPVGYLASLKSYCDKIGLDFDALLDPSSATEQVHFIGKDIIYFHALFWPAMLKFAGRKTPDALNVHGFITVSGEKMSKSRGTGISPLRYLEVGMDPEWLRYYMAAKLNARVEDMDFNPEDFIARVNSDLVGKYVNIASRAANFITRHFEGKLAYLGDTAALSAEFAQQTESIRAALEAREFNRAIREIMAYADGINQAFDAAQPWVLAKGFAEADEARRAQLQDICSRALAGFKALSVMLAPVLPALTSRVARDLFGAQRDFIWSDAADLPAQVAPFKHLMQRVDPQMLDALFEPPAELAAPAPTPGGEALADTISIDDFVKVDLRIAKIINCEEVEGSTKLLRLTLDAGEGRHRNVFSGIKSFYKPQDLIGKLTVLVANLAPRKMKFGVSEGMVLAASHADEKVDAGIYVLEPWPGAQPGMRIH.

Positions 12–22 (PYANGSFHIGH) match the 'HIGH' region motif. Positions 143, 146, 156, and 159 each coordinate Zn(2+). Residues 341-345 (KMSKS) carry the 'KMSKS' region motif. Lys344 contacts ATP. The region spanning 585-691 (DFVKVDLRIA…PGAQPGMRIH (107 aa)) is the tRNA-binding domain.

This sequence belongs to the class-I aminoacyl-tRNA synthetase family. MetG type 1 subfamily. As to quaternary structure, homodimer. It depends on Zn(2+) as a cofactor.

The protein localises to the cytoplasm. The enzyme catalyses tRNA(Met) + L-methionine + ATP = L-methionyl-tRNA(Met) + AMP + diphosphate. Is required not only for elongation of protein synthesis but also for the initiation of all mRNA translation through initiator tRNA(fMet) aminoacylation. The sequence is that of Methionine--tRNA ligase from Bordetella avium (strain 197N).